We begin with the raw amino-acid sequence, 686 residues long: MCFCIVSSPEAMHSNADSPSSGPGLQPVWTTLRSPYVFWIGGAILLALLVHLGIKWQQASAPVRIEYSTFLEHVESGYVERVEIVNGKRINGTYTAAAVQNDRVETRPPPAAPMGAVVDRSRRAFATHKPTAHELTAFLRRHNEAATGTGTAPVTFAATQESDWVGTLLLWGLPLGLIVGIWLFFMRRMATGGREEQIGSDTAALFEEAGGRRVTFDDVAGLAEPKEEVAEVVEFLRRPQKFTRLGGALPTGVLLVGPPGTGKTLLAKAVAGEAGVPFASISGSDFMEMFVGVGASRVRDLFDQAKERAPCIIFIDEVDAIGRTRGGPGGAGTGERDNTLNQLLVEMDGFDSDEGVVIMAATNRPDVLDAALLRPGRFDRQISIHKPDRLERADIFRVHVADLRLDASVDPEALARQTPGFAGAEIANVCNEAALLAARRGRNAVQMDDFDQALDRVMAGLERSNKLISPEERRVIAHHESGHAIVGWFLEHTDPVVKVSVVPRGLSALGHAQHLPKERDLYSREALMDRMTMALGGRGAEEIVFGRATTGAKDDLERVTETAYAMVVDYGMSDRIGPLSYNRAERRADGPLFEKPYSDAMAAAIDEEVADIVREARARANDLLREKRPLLDEMAERLLREEVLGVEALVALLGSPPHGEYAWLKEGDGTSRNSASAEGASPSSQG.

At 1–33 the chain is on the cytoplasmic side; the sequence is MCFCIVSSPEAMHSNADSPSSGPGLQPVWTTLR. Residues 34-54 traverse the membrane as a helical segment; it reads SPYVFWIGGAILLALLVHLGI. At 55–164 the chain is on the periplasmic side; that stretch reads KWQQASAPVR…TFAATQESDW (110 aa). The helical transmembrane segment at 165–185 threads the bilayer; sequence VGTLLLWGLPLGLIVGIWLFF. Residues 186–686 are Cytoplasmic-facing; that stretch reads MRRMATGGRE…AEGASPSSQG (501 aa). An ATP-binding site is contributed by 257-264; it reads GPPGTGKT. H479 provides a ligand contact to Zn(2+). E480 is a catalytic residue. Residues H483 and D555 each coordinate Zn(2+). The tract at residues 661 to 686 is disordered; it reads YAWLKEGDGTSRNSASAEGASPSSQG. The span at 670–686 shows a compositional bias: polar residues; the sequence is TSRNSASAEGASPSSQG.

The protein in the central section; belongs to the AAA ATPase family. In the C-terminal section; belongs to the peptidase M41 family. Homohexamer. It depends on Zn(2+) as a cofactor.

Its subcellular location is the cell inner membrane. In terms of biological role, acts as a processive, ATP-dependent zinc metallopeptidase for both cytoplasmic and membrane proteins. Plays a role in the quality control of integral membrane proteins. The chain is ATP-dependent zinc metalloprotease FtsH 1 from Salinibacter ruber (strain M8).